A 72-amino-acid polypeptide reads, in one-letter code: Palustrin-2CG1 (72 aa).

A signal peptide spans 1 to 22; that stretch reads MFTMKKPLLLLFFLGTISLSLC. Positions 23–39 are cleaved as a propeptide — removed in mature form; the sequence is QEERGADEDDGEMTEEV. A disulfide bridge connects residues Cys-64 and Cys-70.

As to expression, expressed by the skin glands.

The protein resides in the secreted. In terms of biological role, antimicrobial peptide active against a variety of Gram-positive and some Gram-negative bacterial strains. Has antifungal activity against a slime mold isolate. Has hemolytic activity against human erythrocytes. In Amolops chunganensis (Chungan torrent frog), this protein is Palustrin-2CG1.